The following is a 397-amino-acid chain: MNKQVYMDYSATTYTKPEVLEEMLPFFTENFGNPSSLYSFSDKTKKAVNLARERVSKALNAEKNEIFFTSGGSEADNWAIKGIAYANKKKGNHIITTKIEHHAILHTAQFLEKEGFKVTYLPVDEEGFVSVEDIKNAITDETILVSVMFANNEIGTIEPIKEIGELCKEKNIYFHTDAVQAIGHVDIDVKDMNIDLLSMSAHKFYGPKGVGALYIKNGVKIQNLIHGGGQERGKRASTENTAGIVGLGKAIELAMENMPEENEKLSNLRGRLIRGIEARIPEVKLNGPKDMSRRLPNNVNFSFIGIEGETLLLDLDMNGIFGSTGSACASASLDPSHVLLSIGLPHETAHGSLRLSLGAKNTEEDIDYVLEVLPKIIKQRREMSPLWEDYMKNKEEK.

Pyridoxal 5'-phosphate contacts are provided by residues 72-73, Asn-152, Gln-180, and 200-202; these read GS and SAH. At Lys-203 the chain carries N6-(pyridoxal phosphate)lysine. Thr-238 is a pyridoxal 5'-phosphate binding site. The active-site Cysteine persulfide intermediate is Cys-328. Cys-328 serves as a coordination point for [2Fe-2S] cluster.

Belongs to the class-V pyridoxal-phosphate-dependent aminotransferase family. NifS/IscS subfamily. In terms of assembly, homodimer. Forms a heterotetramer with IscU, interacts with other sulfur acceptors. Requires pyridoxal 5'-phosphate as cofactor.

It localises to the cytoplasm. It carries out the reaction (sulfur carrier)-H + L-cysteine = (sulfur carrier)-SH + L-alanine. The protein operates within cofactor biosynthesis; iron-sulfur cluster biosynthesis. In terms of biological role, master enzyme that delivers sulfur to a number of partners involved in Fe-S cluster assembly, tRNA modification or cofactor biosynthesis. Catalyzes the removal of elemental sulfur atoms from cysteine to produce alanine. Functions as a sulfur delivery protein for Fe-S cluster synthesis onto IscU, an Fe-S scaffold assembly protein, as well as other S acceptor proteins. The polypeptide is Cysteine desulfurase IscS (Clostridium botulinum (strain ATCC 19397 / Type A)).